The following is a 475-amino-acid chain: Ribulose bisphosphate carboxylase large chain (475 aa).

Positions 1-2 are excised as a propeptide; sequence MS. Proline 3 carries the N-acetylproline modification. Lysine 14 carries the post-translational modification N6,N6,N6-trimethyllysine. 2 residues coordinate substrate: asparagine 123 and threonine 173. The active-site Proton acceptor is lysine 175. Residue lysine 177 participates in substrate binding. Residues lysine 201, aspartate 203, and glutamate 204 each coordinate Mg(2+). Lysine 201 is modified (N6-carboxylysine). Histidine 294 acts as the Proton acceptor in catalysis. The substrate site is built by arginine 295, histidine 327, and serine 379.

It belongs to the RuBisCO large chain family. Type I subfamily. As to quaternary structure, heterohexadecamer of 8 large chains and 8 small chains; disulfide-linked. The disulfide link is formed within the large subunit homodimers. The cofactor is Mg(2+). In terms of processing, the disulfide bond which can form in the large chain dimeric partners within the hexadecamer appears to be associated with oxidative stress and protein turnover.

It localises to the plastid. It is found in the chloroplast. The catalysed reaction is 2 (2R)-3-phosphoglycerate + 2 H(+) = D-ribulose 1,5-bisphosphate + CO2 + H2O. It catalyses the reaction D-ribulose 1,5-bisphosphate + O2 = 2-phosphoglycolate + (2R)-3-phosphoglycerate + 2 H(+). Functionally, ruBisCO catalyzes two reactions: the carboxylation of D-ribulose 1,5-bisphosphate, the primary event in carbon dioxide fixation, as well as the oxidative fragmentation of the pentose substrate in the photorespiration process. Both reactions occur simultaneously and in competition at the same active site. This is Ribulose bisphosphate carboxylase large chain from Bouvardia ternifolia (Firecrackerbush).